We begin with the raw amino-acid sequence, 189 residues long: Ribonuclease HII (189 aa).

One can recognise an RNase H type-2 domain in the interval 1 to 189 (MIAGVDEAGR…PVRRALNIDC (189 aa)). Residues aspartate 6, glutamate 7, and aspartate 98 each coordinate a divalent metal cation.

The protein belongs to the RNase HII family. It depends on Mn(2+) as a cofactor. Mg(2+) is required as a cofactor.

The protein localises to the cytoplasm. The catalysed reaction is Endonucleolytic cleavage to 5'-phosphomonoester.. Functionally, endonuclease that specifically degrades the RNA of RNA-DNA hybrids. This is Ribonuclease HII from Acinetobacter baylyi (strain ATCC 33305 / BD413 / ADP1).